Reading from the N-terminus, the 706-residue chain is Glutamine-dependent NAD(+) synthetase (706 aa).

The CN hydrolase domain occupies 5-275 (VTVATCALNQ…VEVLTATLDL (271 aa)). The active-site Proton acceptor; for glutaminase activity is the E45. K114 functions as the For glutaminase activity in the catalytic mechanism. Residue C175 is the Nucleophile; for glutaminase activity of the active site. A ligase region spans residues 325–706 (YHSPAEEISL…RQRQELDGVD (382 aa)). 355-362 (PLSGGVDS) contacts ATP. S357 is an active-site residue.

It in the C-terminal section; belongs to the NAD synthetase family. As to quaternary structure, homohexamer.

The catalysed reaction is deamido-NAD(+) + L-glutamine + ATP + H2O = L-glutamate + AMP + diphosphate + NAD(+) + H(+). It participates in cofactor biosynthesis; NAD(+) biosynthesis; NAD(+) from deamido-NAD(+) (L-Gln route): step 1/1. Functionally, catalyzes the ATP-dependent amidation of deamido-NAD to form NAD. Uses L-glutamine as a nitrogen source. This chain is Glutamine-dependent NAD(+) synthetase (NADSYN1), found in Bos taurus (Bovine).